A 218-amino-acid chain; its full sequence is 3-dehydroquinate dehydratase (218 aa).

3-dehydroquinate is bound by residues 29–31 (EFR) and R56. The active-site Proton donor/acceptor is H116. The active-site Schiff-base intermediate with substrate is K142. The 3-dehydroquinate site is built by R180, S200, and Q204.

The protein belongs to the type-I 3-dehydroquinase family. Homodimer.

The catalysed reaction is 3-dehydroquinate = 3-dehydroshikimate + H2O. It participates in metabolic intermediate biosynthesis; chorismate biosynthesis; chorismate from D-erythrose 4-phosphate and phosphoenolpyruvate: step 3/7. In terms of biological role, involved in the third step of the chorismate pathway, which leads to the biosynthesis of aromatic amino acids. Catalyzes the cis-dehydration of 3-dehydroquinate (DHQ) and introduces the first double bond of the aromatic ring to yield 3-dehydroshikimate. The chain is 3-dehydroquinate dehydratase from Methanococcus vannielii (strain ATCC 35089 / DSM 1224 / JCM 13029 / OCM 148 / SB).